Reading from the N-terminus, the 815-residue chain is Heme-copper oxidase subunit I+III (815 aa).

A COX1 region spans residues 1–467 (MVSRLRGFLA…QLSTLGAFIF (467 aa)). A helical membrane pass occupies residues 26–46 (LLYLVTSIAFLLIAGSLALLF). His-70 is a binding site for Fe(II)-heme a. The next 18 helical transmembrane spans lie at 71–91 (GLIMLLWFASPFAFGLANYIV), 105–125 (LNALSYWLYLLSGLVLLASFF), 157–177 (LAIFLFSLSVTLGTINFLVTI), 197–217 (ILFTVILMLWAFPPLMVGGAL), 242–262 (LFWFFGHPEVYILLFPALGAM), 281–301 (LTAFLIATIISFVVWMHHMFI), 314–334 (ITTILISIPFEMAVMSFIFTL), 339–359 (LVYTVPMLFAVGALLNFIIGG), 380–400 (VVAHFHYILVGTVTLGLIAGL), 419–439 (IHFALAMLGVALTFLPQFALM), 463–483 (GAFIFGGSMAIGLVNFLYSLV), 580–600 (ALFGLFVSKPLSYLGAIVFLL), 637–657 (WVFIASEVATFGSIFSAYFFI), 683–703 (LINTIILFTGTMLFTLAYLGV), 708–728 (YLITLSGLLGTLFMAIYFLTV), 736–756 (LLIAGLGLDAGMYMQAYYVTT), 758–778 (AHALHVILGVLATTYLLVKLF), and 791–811 (VLAVGIYWGIVEIVWTLVFPL). Cu cation-binding residues include His-248, Tyr-252, His-297, and His-298. The segment at residues 248 to 252 (HPEVY) is a cross-link (1'-histidyl-3'-tyrosine (His-Tyr)). Position 383 (His-383) interacts with heme a3. His-385 lines the Fe(II)-heme a pocket. Residues 545 to 815 (DVSNVPLSGG…TLVFPLYYLV (271 aa)) form a COX3 region.

In the N-terminal section; belongs to the heme-copper respiratory oxidase family. This sequence in the C-terminal section; belongs to the cytochrome c oxidase subunit 3 family. Heme is required as a cofactor. Cu cation serves as cofactor.

The protein resides in the cell membrane. In Aeropyrum pernix (strain ATCC 700893 / DSM 11879 / JCM 9820 / NBRC 100138 / K1), this protein is Heme-copper oxidase subunit I+III (aoxB).